The following is a 480-amino-acid chain: 6-phosphogluconate dehydrogenase, decarboxylating 1 (480 aa).

NADP(+) contacts are provided by residues 10–15 (GLAVMG), 33–35 (NRT), 77–79 (VKA), and asparagine 105. Substrate-binding positions include asparagine 105 and 131 to 133 (SGG). The active-site Proton acceptor is the lysine 186. Residue 189-190 (HN) participates in substrate binding. Glutamate 193 (proton donor) is an active-site residue. Substrate-binding residues include tyrosine 194, lysine 264, arginine 291, arginine 450, and histidine 456.

The protein belongs to the 6-phosphogluconate dehydrogenase family. Homodimer. Highly expressed in inflorescence, lowly expressed in root and embryos and almost absent in leaves.

Its subcellular location is the cytoplasm. The catalysed reaction is 6-phospho-D-gluconate + NADP(+) = D-ribulose 5-phosphate + CO2 + NADPH. Its pathway is carbohydrate degradation; pentose phosphate pathway; D-ribulose 5-phosphate from D-glucose 6-phosphate (oxidative stage): step 3/3. Catalyzes the oxidative decarboxylation of 6-phosphogluconate to ribulose 5-phosphate and CO(2), with concomitant reduction of NADP to NADPH. The polypeptide is 6-phosphogluconate dehydrogenase, decarboxylating 1 (G6PGH1) (Oryza sativa subsp. japonica (Rice)).